Reading from the N-terminus, the 132-residue chain is UPF0251 protein PTH_0588 (132 aa).

This sequence belongs to the UPF0251 family.

The polypeptide is UPF0251 protein PTH_0588 (Pelotomaculum thermopropionicum (strain DSM 13744 / JCM 10971 / SI)).